Here is a 167-residue protein sequence, read N- to C-terminus: Photosystem I assembly protein Ycf3 (167 aa).

TPR repeat units follow at residues 35 to 68, 72 to 105, and 120 to 153; these read AFTYYREGMSAQSEGEYAEALQNYYEAMRLEVDA, SYIFYNIGLIHTSNGEHARALEYYYQALERNPSL, and GEQAIENGQAEISKMLFDKAADYWKEAIRLAPTN.

The protein belongs to the Ycf3 family.

It localises to the plastid. The protein localises to the chloroplast thylakoid membrane. Functionally, essential for the assembly of the photosystem I (PSI) complex. May act as a chaperone-like factor to guide the assembly of the PSI subunits. This Pleurastrum terricola (Filamentous green alga) protein is Photosystem I assembly protein Ycf3.